The sequence spans 153 residues: Large ribosomal subunit protein uL22 (153 aa).

This sequence belongs to the universal ribosomal protein uL22 family. As to quaternary structure, part of the 50S ribosomal subunit.

Its function is as follows. This protein binds specifically to 23S rRNA. It makes multiple contacts with different domains of the 23S rRNA in the assembled 50S subunit and ribosome. In terms of biological role, the globular domain of the protein is located near the polypeptide exit tunnel on the outside of the subunit, while an extended beta-hairpin is found that lines the wall of the exit tunnel in the center of the 70S ribosome. The protein is Large ribosomal subunit protein uL22 of Methanoculleus marisnigri (strain ATCC 35101 / DSM 1498 / JR1).